A 276-amino-acid chain; its full sequence is Expansin-A25 (276 aa).

An N-terminal signal peptide occupies residues 1–27 (MKLLEQMVYVECFMIIMATLLVSMSYG). An Expansin-like EG45 domain is found at 73 to 183 (QGACGYGDLF…RRISCARTGG (111 aa)). An Expansin-like CBD domain is found at 193–272 (YFLMILPYNV…NWGFGQTFDG (80 aa)).

Belongs to the expansin family. Expansin A subfamily.

The protein localises to the secreted. It is found in the cell wall. The protein resides in the membrane. In terms of biological role, causes loosening and extension of plant cell walls by disrupting non-covalent bonding between cellulose microfibrils and matrix glucans. No enzymatic activity has been found. The sequence is that of Expansin-A25 (EXPA25) from Arabidopsis thaliana (Mouse-ear cress).